The chain runs to 138 residues: Phospholipase A2 homolog 1 (138 aa).

A signal peptide spans 1–16 (MRTLWIMAVLLVGVEG). Disulfide bonds link Cys-42–Cys-132, Cys-44–Cys-60, Cys-59–Cys-111, Cys-65–Cys-138, Cys-66–Cys-104, Cys-73–Cys-97, and Cys-91–Cys-102. Residues 121–134 (KKYKNNYLKPFCKK) are important for membrane-damaging activities in eukaryotes and bacteria; heparin-binding.

Belongs to the phospholipase A2 family. Group II subfamily. K49 sub-subfamily. Homodimer; non-covalently linked (probable alternative/compact dimer conformation in solution). In terms of tissue distribution, expressed by the venom gland.

It is found in the secreted. Its function is as follows. Snake venom phospholipase A2 homolog that lacks enzymatic and anticoagulant activities. In mice, it induces conspicuous local myonecrosis, edema, and a systemic interleukin-6 response. In vitro, it is cytolytic upon myoblasts, and weakly bactericidal. A model of myotoxic mechanism has been proposed: an apo Lys49-PLA2 is activated by the entrance of a hydrophobic molecule (e.g. fatty acid) at the hydrophobic channel of the protein leading to a reorientation of a monomer. This reorientation causes a transition between 'inactive' to 'active' states, causing alignment of C-terminal and membrane-docking sites (MDoS) side-by-side and putting the membrane-disruption sites (MDiS) in the same plane, exposed to solvent and in a symmetric position for both monomers. The MDoS region stabilizes the toxin on membrane by the interaction of charged residues with phospholipid head groups. Subsequently, the MDiS region destabilizes the membrane with penetration of hydrophobic residues. This insertion causes a disorganization of the membrane, allowing an uncontrolled influx of ions (i.e. calcium and sodium), and eventually triggering irreversible intracellular alterations and cell death. This is Phospholipase A2 homolog 1 from Bothrops atrox (Barba amarilla).